The sequence spans 134 residues: Phosphoribosyl-AMP cyclohydrolase (134 aa).

Asp-93 is a Mg(2+) binding site. Cys-94 is a Zn(2+) binding site. 2 residues coordinate Mg(2+): Asp-95 and Asp-97. Positions 112 and 119 each coordinate Zn(2+).

This sequence belongs to the PRA-CH family. Homodimer. Mg(2+) serves as cofactor. Zn(2+) is required as a cofactor.

The protein localises to the cytoplasm. It carries out the reaction 1-(5-phospho-beta-D-ribosyl)-5'-AMP + H2O = 1-(5-phospho-beta-D-ribosyl)-5-[(5-phospho-beta-D-ribosylamino)methylideneamino]imidazole-4-carboxamide. The protein operates within amino-acid biosynthesis; L-histidine biosynthesis; L-histidine from 5-phospho-alpha-D-ribose 1-diphosphate: step 3/9. In terms of biological role, catalyzes the hydrolysis of the adenine ring of phosphoribosyl-AMP. In Caulobacter sp. (strain K31), this protein is Phosphoribosyl-AMP cyclohydrolase.